Here is a 500-residue protein sequence, read N- to C-terminus: ATP synthase subunit beta (500 aa).

Gly155–Thr162 provides a ligand contact to ATP.

Belongs to the ATPase alpha/beta chains family. F-type ATPases have 2 components, CF(1) - the catalytic core - and CF(0) - the membrane proton channel. CF(1) has five subunits: alpha(3), beta(3), gamma(1), delta(1), epsilon(1). CF(0) has three main subunits: a(1), b(2) and c(9-12). The alpha and beta chains form an alternating ring which encloses part of the gamma chain. CF(1) is attached to CF(0) by a central stalk formed by the gamma and epsilon chains, while a peripheral stalk is formed by the delta and b chains.

It localises to the cell inner membrane. The enzyme catalyses ATP + H2O + 4 H(+)(in) = ADP + phosphate + 5 H(+)(out). Functionally, produces ATP from ADP in the presence of a proton gradient across the membrane. The catalytic sites are hosted primarily by the beta subunits. This chain is ATP synthase subunit beta, found in Azobacteroides pseudotrichonymphae genomovar. CFP2.